We begin with the raw amino-acid sequence, 274 residues long: Ribulose-phosphate 3-epimerase, chloroplastic (274 aa).

Residues 1 to 39 (MASPSSSSSLCSTFASPRAASLGRRLAFSSPRKAFRVRA) constitute a chloroplast transit peptide. A substrate-binding site is contributed by S56. Positions 81, 83, and 114 each coordinate a divalent metal cation. D83 (proton acceptor) is an active-site residue. Residues H114, 192–195 (GFGG), 225–227 (DGG), and 247–248 (GS) each bind substrate. D225 provides a ligand contact to a divalent metal cation. D225 serves as the catalytic Proton donor.

This sequence belongs to the ribulose-phosphate 3-epimerase family. Homooctamer. Co(2+) is required as a cofactor. The cofactor is Fe(2+). Requires Mn(2+) as cofactor. Zn(2+) serves as cofactor.

Its subcellular location is the plastid. It is found in the chloroplast thylakoid membrane. The catalysed reaction is D-ribulose 5-phosphate = D-xylulose 5-phosphate. It participates in carbohydrate biosynthesis; Calvin cycle. Catalyzes the reversible epimerization of D-ribulose 5-phosphate to D-xylulose 5-phosphate. In Oryza sativa subsp. japonica (Rice), this protein is Ribulose-phosphate 3-epimerase, chloroplastic (RPE).